The chain runs to 1560 residues: Lysine-specific demethylase 5C (1560 aa).

A JmjN domain is found at Cys-14–Pro-55. In terms of domain architecture, ARID spans Thr-79 to Ser-169. The segment covering Leu-197–Asn-207 has biased composition (polar residues). The interval Leu-197–Ile-227 is disordered. Glycyl lysine isopeptide (Lys-Gly) (interchain with G-Cter in SUMO2) cross-links involve residues Lys-205, Lys-229, Lys-244, and Lys-274. Ser-287 is subject to Phosphoserine. Lys-295 is covalently cross-linked (Glycyl lysine isopeptide (Lys-Gly) (interchain with G-Cter in SUMO2)). Residues Ser-301 and Ser-317 each carry the phosphoserine modification. The segment at Val-326 to Val-372 adopts a PHD-type 1 zinc-finger fold. Tyr-440 is a binding site for 2-oxoglutarate. Residues Glu-468–Arg-634 enclose the JmjC domain. Fe cation-binding residues include His-514 and Glu-516. Residues Ser-522, Asn-524, and Lys-532 each coordinate 2-oxoglutarate. His-602 serves as a coordination point for Fe cation. Residues Cys-707 to Met-759 form a C5HC2 zinc finger. Phosphoserine occurs at positions 893 and 897. Lys-1127 is covalently cross-linked (Glycyl lysine isopeptide (Lys-Gly) (interchain with G-Cter in SUMO2)). Residues Ile-1161–Ala-1181 are disordered. Residues Ser-1169–Ala-1181 show a composition bias toward low complexity. The segment at Ile-1187–Met-1248 adopts a PHD-type 2 zinc-finger fold. 2 disordered regions span residues Gln-1316–Lys-1371 and Glu-1444–Leu-1560. Basic and acidic residues predominate over residues Pro-1335–Pro-1345. Ser-1359 is subject to Phosphoserine. The segment covering Ser-1448–Val-1463 has biased composition (basic residues). Over residues Asp-1464–Arg-1481 the composition is skewed to basic and acidic residues. Over residues Glu-1488–Gly-1503 the composition is skewed to acidic residues. The segment covering Ser-1516–Thr-1544 has biased composition (polar residues).

The protein belongs to the JARID1 histone demethylase family. As to quaternary structure, part of two distinct complexes, one containing E2F6, and the other containing REST. Interacts with ZMYND8. The cofactor is Fe(2+). In terms of tissue distribution, expressed in all tissues examined. Highest levels found in brain and skeletal muscle.

Its subcellular location is the nucleus. The enzyme catalyses N(6),N(6),N(6)-trimethyl-L-lysyl(4)-[histone H3] + 3 2-oxoglutarate + 3 O2 = L-lysyl(4)-[histone H3] + 3 formaldehyde + 3 succinate + 3 CO2. The inhibitor KDOAM-25 and others inhibit its demethylase activity, resulting to cell cycle arrest in myeloma cells. In terms of biological role, histone demethylase that specifically demethylates 'Lys-4' of histone H3, thereby playing a central role in histone code. Does not demethylate histone H3 'Lys-9', H3 'Lys-27', H3 'Lys-36', H3 'Lys-79' or H4 'Lys-20'. Demethylates trimethylated and dimethylated but not monomethylated H3 'Lys-4'. Participates in transcriptional repression of neuronal genes by recruiting histone deacetylases and REST at neuron-restrictive silencer elements. Represses the CLOCK-BMAL1 heterodimer-mediated transcriptional activation of the core clock component PER2. This chain is Lysine-specific demethylase 5C, found in Homo sapiens (Human).